A 168-amino-acid polypeptide reads, in one-letter code: MKEKISEKEYKALIRKIGKEHFDGEKEEYGDGTVGVWTYELRKYKLKPPVKVKYVTQEQFQEYKDSNNQRLIKIETTLAAQGEQIRIQVEQIKELQIEQKAQGETLKLILQTLQKMSDRLDKMEVKMDKMEEKMDKMEGKIDKIENRMDKMEVKMDKMEKRIDKLESK.

The protein belongs to the UPF0134 family.

The sequence is that of UPF0134 protein MPN_524 from Mycoplasma pneumoniae (strain ATCC 29342 / M129 / Subtype 1) (Mycoplasmoides pneumoniae).